The following is a 305-amino-acid chain: 2-oxoacid:ferredoxin oxidoreductase subunit beta (305 aa).

[4Fe-4S] cluster-binding residues include C12, C15, and C46. Residues 44–47 (IGCS) and H65 contribute to the thiamine diphosphate site. A Mg(2+)-binding site is contributed by D90. 91-92 (GD) is a binding site for thiamine diphosphate. Residues N118 and V120 each contribute to the Mg(2+) site. 122–123 (GL) serves as a coordination point for thiamine diphosphate. C197 lines the [4Fe-4S] cluster pocket.

As to quaternary structure, heterodimer composed of an alpha and a beta subunit. [4Fe-4S] cluster is required as a cofactor. The cofactor is thiamine diphosphate. Requires Mg(2+) as cofactor.

Its subcellular location is the cytoplasm. The catalysed reaction is a 2-oxocarboxylate + 2 oxidized [2Fe-2S]-[ferredoxin] + CoA = an acyl-CoA + 2 reduced [2Fe-2S]-[ferredoxin] + CO2 + H(+). In terms of biological role, catalyzes the coenzyme A-dependent oxidative decarboxylation of different 2-oxoacids such as 2-oxoglutarate, pyruvate and 2-oxobutyrate to form their CoA derivatives. The sequence is that of 2-oxoacid:ferredoxin oxidoreductase subunit beta from Sulfolobus sp.